Reading from the N-terminus, the 302-residue chain is Deoxyhypusine hydroxylase (302 aa).

Methionine 1 bears the N-acetylmethionine mark. 5 HEAT-like PBS-type repeats span residues 54-80 (LKHE…VLQD), 87-113 (VRHE…YSTD), 175-201 (ERYR…GLKC), 206-232 (FRHE…TLAR), and 239-265 (VRHE…YITD). Positions 56, 89, and 90 each coordinate Fe cation. Fe cation-binding residues include histidine 208, histidine 241, and glutamate 242.

This sequence belongs to the deoxyhypusine hydroxylase family. The cofactor is Fe(2+).

It carries out the reaction [eIF5A protein]-deoxyhypusine + AH2 + O2 = [eIF5A protein]-hypusine + A + H2O. It participates in protein modification; eIF5A hypusination. Functionally, catalyzes the hydroxylation of the N(6)-(4-aminobutyl)-L-lysine intermediate produced by deoxyhypusine synthase/DHPS on a critical lysine of the eukaryotic translation initiation factor 5A/eIF-5A. This is the second step of the post-translational modification of that lysine into an unusual amino acid residue named hypusine. Hypusination is unique to mature eIF-5A factor and is essential for its function. The sequence is that of Deoxyhypusine hydroxylase (Dohh) from Rattus norvegicus (Rat).